The following is a 74-amino-acid chain: UPF0346 protein LCA_0996 (74 aa).

This sequence belongs to the UPF0346 family.

The sequence is that of UPF0346 protein LCA_0996 from Latilactobacillus sakei subsp. sakei (strain 23K) (Lactobacillus sakei subsp. sakei).